The sequence spans 162 residues: NADH-ubiquinone oxidoreductase 24 kDa subunit homolog C11E3.12, mitochondrial (162 aa).

Residues Cys88, Cys93, Cys125, and Cys129 each contribute to the [2Fe-2S] cluster site.

This sequence belongs to the complex I 24 kDa subunit family. It depends on [2Fe-2S] cluster as a cofactor.

It localises to the mitochondrion. This Schizosaccharomyces pombe (strain 972 / ATCC 24843) (Fission yeast) protein is NADH-ubiquinone oxidoreductase 24 kDa subunit homolog C11E3.12, mitochondrial.